The sequence spans 294 residues: Cuticle collagen 144 (294 aa).

An N-terminal signal peptide occupies residues 1–30 (MEKILVTISTGAASFAVLAVLFTIPSLYNT). The segment covering 100 to 112 (TCPPGPPGPPGQP) has biased composition (pro residues). 2 disordered regions span residues 100 to 134 (TCPP…TYAP) and 148 to 278 (PQGP…GNDA). Triple-helical region regions lie at residues 102 to 127 (PPGP…KGED) and 153 to 274 (GPEG…PGLP). Low complexity-rich tracts occupy residues 164-209 (AGPD…PGQD) and 219-265 (APGA…DGQP).

As to quaternary structure, collagen polypeptide chains are complexed within the cuticle by disulfide bonds and other types of covalent cross-links.

Functionally, nematode cuticles are composed largely of collagen-like proteins. The cuticle functions both as an exoskeleton and as a barrier to protect the worm from its environment. The chain is Cuticle collagen 144 from Caenorhabditis briggsae.